The chain runs to 82 residues: Small ribosomal subunit protein bS18A (82 aa).

This sequence belongs to the bacterial ribosomal protein bS18 family. In terms of assembly, part of the 30S ribosomal subunit. Forms a tight heterodimer with protein bS6.

In terms of biological role, binds as a heterodimer with protein bS6 to the central domain of the 16S rRNA, where it helps stabilize the platform of the 30S subunit. In Streptomyces griseus subsp. griseus (strain JCM 4626 / CBS 651.72 / NBRC 13350 / KCC S-0626 / ISP 5235), this protein is Small ribosomal subunit protein bS18A.